The sequence spans 226 residues: Urease accessory protein UreF (226 aa).

Belongs to the UreF family. In terms of assembly, ureD, UreF and UreG form a complex that acts as a GTP-hydrolysis-dependent molecular chaperone, activating the urease apoprotein by helping to assemble the nickel containing metallocenter of UreC. The UreE protein probably delivers the nickel.

It localises to the cytoplasm. Functionally, required for maturation of urease via the functional incorporation of the urease nickel metallocenter. The sequence is that of Urease accessory protein UreF from Burkholderia vietnamiensis (strain G4 / LMG 22486) (Burkholderia cepacia (strain R1808)).